The sequence spans 364 residues: Uroporphyrinogen decarboxylase (364 aa).

Substrate contacts are provided by residues 28–32 (RQAGR), Asp-78, Tyr-160, Thr-215, and His-333.

Belongs to the uroporphyrinogen decarboxylase family. Homodimer.

The protein localises to the cytoplasm. It catalyses the reaction uroporphyrinogen III + 4 H(+) = coproporphyrinogen III + 4 CO2. It participates in porphyrin-containing compound metabolism; protoporphyrin-IX biosynthesis; coproporphyrinogen-III from 5-aminolevulinate: step 4/4. Functionally, catalyzes the decarboxylation of four acetate groups of uroporphyrinogen-III to yield coproporphyrinogen-III. The chain is Uroporphyrinogen decarboxylase from Burkholderia thailandensis (strain ATCC 700388 / DSM 13276 / CCUG 48851 / CIP 106301 / E264).